The chain runs to 1464 residues: Gag-Pol polyprotein (1464 aa).

The N-myristoyl glycine; by host moiety is linked to residue glycine 2. The interaction with Gp41 stretch occupies residues 7–31 (VLSGKKTDELEKVRLRPGGKKRYML). The short motif at 16–22 (LEKVRLR) is the Nuclear export signal element. Residues 26–32 (KKRYMLK) carry the Nuclear localization signal motif. Tyrosine 130 carries the post-translational modification Phosphotyrosine; by host. The interaction with human PPIA/CYPA and NUP153 stretch occupies residues 186 to 223 (NCVGEHQAAMQIIREIINEEAADWDQQHPSPGPMPAGQ). The interval 274 to 360 (YNPTNILDIK…GGPGQKARLM (87 aa)) is dimerization/Multimerization of capsid protein p24. CCHC-type zinc fingers lie at residues 387-404 (VTCWNCGKAGHTARQCKA) and 408-425 (QGCWKCGQQGHIMSKCPE). Residues 483–499 (AKELHATREEAEGEQRE) are compositionally biased toward basic and acidic residues. Positions 483-504 (AKELHATREEAEGEQRETLQGG) are disordered. Positions 511 to 515 (PQFSL) are dimerization of protease. A Peptidase A2 domain is found at 531-600 (EVLLDTGADD…PINIFGRNIL (70 aa)). Aspartate 535 serves as the catalytic For protease activity; shared with dimeric partner. 2 dimerization of protease regions span residues 559–565 (GIGGFIN) and 598–610 (NILNSLGMTLNFP). Residues 654 to 844 (GQLEEAPPTN…PFKWMGYELW (191 aa)) enclose the Reverse transcriptase domain. The Mg(2+) site is built by aspartate 719, aspartate 794, and aspartate 795. The tract at residues 836 to 844 (FKWMGYELW) is RT 'primer grip'. Positions 1006–1022 (WDQWWTDYWQVTWIPEW) match the Tryptophan repeat motif motif. The region spanning 1042-1165 (LEGVETYYTD…VDHLVSQGIR (124 aa)) is the RNase H type-1 domain. The Mg(2+) site is built by aspartate 1051, glutamate 1086, aspartate 1106, and aspartate 1157. An Integrase-type zinc finger spans residues 1171–1212 (EKIEPAQEEHEKYHNNVKELVHKFGIPQLVARQIVNSCDKCQ). The Zn(2+) site is built by histidine 1180, histidine 1184, cysteine 1208, and cysteine 1211. An Integrase catalytic domain is found at 1222–1373 (VNSELGTWQM…PAERIVNMIT (152 aa)). The Mg(2+) site is built by aspartate 1232, aspartate 1284, and glutamate 1320. The segment at residues 1391-1438 (FRVYYREGRDQLWKGPGDLLWKGEGAVIIKVGTEIKVIPRRKAKIIRN) is a DNA-binding region (integrase-type).

Homotrimer; further assembles as hexamers of trimers. Interacts with gp41 (via C-terminus). Interacts with host CALM1; this interaction induces a conformational change in the Matrix protein, triggering exposure of the myristate group. Interacts with host AP3D1; this interaction allows the polyprotein trafficking to multivesicular bodies during virus assembly. Part of the pre-integration complex (PIC) which is composed of viral genome, matrix protein, Vpr and integrase. As to quaternary structure, homodimer; the homodimer further multimerizes as homohexamers or homopentamers. Interacts with human PPIA/CYPA. Interacts with human NUP153. Interacts with host PDZD8; this interaction stabilizes the capsid. Interacts with monkey TRIM5; this interaction destabilizes the capsid. In terms of assembly, homodimer, whose active site consists of two apposed aspartic acid residues. Heterodimer of p66 RT and p51 RT (RT p66/p51). Heterodimerization of RT is essential for DNA polymerase activity. The overall folding of the subdomains is similar in p66 RT and p51 RT but the spatial arrangements of the subdomains are dramatically different. As to quaternary structure, homotetramer; may further associate as a homohexadecamer. Part of the pre-integration complex (PIC) which is composed of viral genome, matrix protein, Vpr and integrase. Interacts with human SMARCB1/INI1 and human PSIP1/LEDGF isoform 1. Interacts with human KPNA3; this interaction might play a role in nuclear import of the pre-integration complex. Interacts with human NUP153; this interaction might play a role in nuclear import of the pre-integration complex. The cofactor is Mg(2+). Specific enzymatic cleavages by the viral protease yield mature proteins. The protease is released by autocatalytic cleavage. The polyprotein is cleaved during and after budding, this process is termed maturation. Proteolytic cleavage of p66 RT removes the RNase H domain to yield the p51 RT subunit. Nucleocapsid protein p7 might be further cleaved after virus entry.

The protein localises to the host cell membrane. Its subcellular location is the host endosome. It localises to the host multivesicular body. The protein resides in the virion membrane. It is found in the host nucleus. The protein localises to the host cytoplasm. Its subcellular location is the virion. The enzyme catalyses Endopeptidase for which the P1 residue is preferably hydrophobic.. The catalysed reaction is Endohydrolysis of RNA in RNA/DNA hybrids. Three different cleavage modes: 1. sequence-specific internal cleavage of RNA. Human immunodeficiency virus type 1 and Moloney murine leukemia virus enzymes prefer to cleave the RNA strand one nucleotide away from the RNA-DNA junction. 2. RNA 5'-end directed cleavage 13-19 nucleotides from the RNA end. 3. DNA 3'-end directed cleavage 15-20 nucleotides away from the primer terminus.. It carries out the reaction 3'-end directed exonucleolytic cleavage of viral RNA-DNA hybrid.. It catalyses the reaction DNA(n) + a 2'-deoxyribonucleoside 5'-triphosphate = DNA(n+1) + diphosphate. Protease: The viral protease is inhibited by many synthetic protease inhibitors (PIs), such as amprenavir, atazanavir, indinavir, loprinavir, nelfinavir, ritonavir and saquinavir. Use of protease inhibitors in tritherapy regimens permit more ambitious therapeutic strategies. Reverse transcriptase/ribonuclease H: RT can be inhibited either by nucleoside RT inhibitors (NRTIs) or by non nucleoside RT inhibitors (NNRTIs). NRTIs act as chain terminators, whereas NNRTIs inhibit DNA polymerization by binding a small hydrophobic pocket near the RT active site and inducing an allosteric change in this region. Classical NRTIs are abacavir, adefovir (PMEA), didanosine (ddI), lamivudine (3TC), stavudine (d4T), tenofovir (PMPA), zalcitabine (ddC), and zidovudine (AZT). Classical NNRTIs are atevirdine (BHAP U-87201E), delavirdine, efavirenz (DMP-266), emivirine (I-EBU), and nevirapine (BI-RG-587). The tritherapies used as a basic effective treatment of AIDS associate two NRTIs and one NNRTI. Mediates, with Gag polyprotein, the essential events in virion assembly, including binding the plasma membrane, making the protein-protein interactions necessary to create spherical particles, recruiting the viral Env proteins, and packaging the genomic RNA via direct interactions with the RNA packaging sequence (Psi). Gag-Pol polyprotein may regulate its own translation, by the binding genomic RNA in the 5'-UTR. At low concentration, the polyprotein would promote translation, whereas at high concentration, the polyprotein would encapsidate genomic RNA and then shut off translation. In terms of biological role, targets the polyprotein to the plasma membrane via a multipartite membrane-binding signal, that includes its myristoylated N-terminus. Matrix protein is part of the pre-integration complex. Implicated in the release from host cell mediated by Vpu. Binds to RNA. Its function is as follows. Forms the conical core that encapsulates the genomic RNA-nucleocapsid complex in the virion. Most core are conical, with only 7% tubular. The core is constituted by capsid protein hexamer subunits. The core is disassembled soon after virion entry. Host restriction factors such as TRIM5-alpha or TRIMCyp bind retroviral capsids and cause premature capsid disassembly, leading to blocks in reverse transcription. Capsid restriction by TRIM5 is one of the factors which restricts HIV-1 to the human species. Host PIN1 apparently facilitates the virion uncoating. On the other hand, interactions with PDZD8 or CYPA stabilize the capsid. Functionally, encapsulates and protects viral dimeric unspliced genomic RNA (gRNA). Binds these RNAs through its zinc fingers. Acts as a nucleic acid chaperone which is involved in rearangement of nucleic acid secondary structure during gRNA retrotranscription. Also facilitates template switch leading to recombination. As part of the polyprotein, participates in gRNA dimerization, packaging, tRNA incorporation and virion assembly. Aspartyl protease that mediates proteolytic cleavages of Gag and Gag-Pol polyproteins during or shortly after the release of the virion from the plasma membrane. Cleavages take place as an ordered, step-wise cascade to yield mature proteins. This process is called maturation. Displays maximal activity during the budding process just prior to particle release from the cell. Also cleaves Nef and Vif, probably concomitantly with viral structural proteins on maturation of virus particles. Hydrolyzes host EIF4GI and PABP1 in order to shut off the capped cellular mRNA translation. The resulting inhibition of cellular protein synthesis serves to ensure maximal viral gene expression and to evade host immune response. In terms of biological role, multifunctional enzyme that converts the viral RNA genome into dsDNA in the cytoplasm, shortly after virus entry into the cell. This enzyme displays a DNA polymerase activity that can copy either DNA or RNA templates, and a ribonuclease H (RNase H) activity that cleaves the RNA strand of RNA-DNA heteroduplexes in a partially processive 3' to 5' endonucleasic mode. Conversion of viral genomic RNA into dsDNA requires many steps. A tRNA(3)-Lys binds to the primer-binding site (PBS) situated at the 5'-end of the viral RNA. RT uses the 3' end of the tRNA primer to perform a short round of RNA-dependent minus-strand DNA synthesis. The reading proceeds through the U5 region and ends after the repeated (R) region which is present at both ends of viral RNA. The portion of the RNA-DNA heteroduplex is digested by the RNase H, resulting in a ssDNA product attached to the tRNA primer. This ssDNA/tRNA hybridizes with the identical R region situated at the 3' end of viral RNA. This template exchange, known as minus-strand DNA strong stop transfer, can be either intra- or intermolecular. RT uses the 3' end of this newly synthesized short ssDNA to perform the RNA-dependent minus-strand DNA synthesis of the whole template. RNase H digests the RNA template except for two polypurine tracts (PPTs) situated at the 5'-end and near the center of the genome. It is not clear if both polymerase and RNase H activities are simultaneous. RNase H probably can proceed both in a polymerase-dependent (RNA cut into small fragments by the same RT performing DNA synthesis) and a polymerase-independent mode (cleavage of remaining RNA fragments by free RTs). Secondly, RT performs DNA-directed plus-strand DNA synthesis using the PPTs that have not been removed by RNase H as primers. PPTs and tRNA primers are then removed by RNase H. The 3' and 5' ssDNA PBS regions hybridize to form a circular dsDNA intermediate. Strand displacement synthesis by RT to the PBS and PPT ends produces a blunt ended, linear dsDNA copy of the viral genome that includes long terminal repeats (LTRs) at both ends. Its function is as follows. Catalyzes viral DNA integration into the host chromosome, by performing a series of DNA cutting and joining reactions. This enzyme activity takes place after virion entry into a cell and reverse transcription of the RNA genome in dsDNA. The first step in the integration process is 3' processing. This step requires a complex comprising the viral genome, matrix protein, Vpr and integrase. This complex is called the pre-integration complex (PIC). The integrase protein removes 2 nucleotides from each 3' end of the viral DNA, leaving recessed CA OH's at the 3' ends. In the second step, the PIC enters cell nucleus. This process is mediated through integrase and Vpr proteins, and allows the virus to infect a non dividing cell. This ability to enter the nucleus is specific of lentiviruses, other retroviruses cannot and rely on cell division to access cell chromosomes. In the third step, termed strand transfer, the integrase protein joins the previously processed 3' ends to the 5' ends of strands of target cellular DNA at the site of integration. The 5'-ends are produced by integrase-catalyzed staggered cuts, 5 bp apart. A Y-shaped, gapped, recombination intermediate results, with the 5'-ends of the viral DNA strands and the 3' ends of target DNA strands remaining unjoined, flanking a gap of 5 bp. The last step is viral DNA integration into host chromosome. This involves host DNA repair synthesis in which the 5 bp gaps between the unjoined strands are filled in and then ligated. Since this process occurs at both cuts flanking the HIV genome, a 5 bp duplication of host DNA is produced at the ends of HIV-1 integration. Alternatively, Integrase may catalyze the excision of viral DNA just after strand transfer, this is termed disintegration. This is Gag-Pol polyprotein (gag-pol) from Human immunodeficiency virus type 2 subtype B (isolate EHO) (HIV-2).